The chain runs to 464 residues: IAA-amino acid hydrolase ILR1-like 6 (464 aa).

The signal sequence occupies residues 1 to 24; sequence MDNLRKLNLLSVSLTIIFVSLTIA. Positions 175, 177, 211, 235, and 433 each coordinate Mn(2+).

This sequence belongs to the peptidase M20 family.

The catalysed reaction is a jasmonyl-L-amino acid + H2O = a jasmonate + an L-alpha-amino acid. Hydrolyzes certain amino acid conjugates of the plant growth regulator indole-3-acetic acid (IAA). Also hydrolyzes amino acid conjugates of jasmonic acid and 12-hydroxy jasmonic acid. The protein is IAA-amino acid hydrolase ILR1-like 6 of Arabidopsis thaliana (Mouse-ear cress).